Consider the following 349-residue polypeptide: MDTIAARALTVMRACATLQEARIVLEANVMEILGIAINRYNGLTLRGVTMRPTSLAQRNEMFFMCLDMMLSAAGINVGPISPDYTQHMATIGVLATPEIPFTTEAANEIARVTGETSTWGPARQPYGFFLETEETYQPGRWFMRAAQAVTAVVCGPDMIQVSLNAGARGDVQQIFQGRNDPMMIYLVWRRIENFAMAQGNSQQTLAGVTVSVGGVDMRAGRIIAWDGQAALQIHNPTQQNAMVQIQVVFYISMDKTLNQYPALTAEIFNVYSFRDHTWHGLRTAILNRTTLPNMLPPIFPPNDRDSILTLLLLSTLADVYTVLRPEFAIHGVNPMSGPLTRATARAAYV.

Asn287 carries an N-linked (GlcNAc...) asparagine; by host glycan.

It belongs to the orbivirus VP7 family. As to quaternary structure, homotrimer that assemble in a complex of 260 capsomers on an inner scaffold composed of VP3.

The protein resides in the virion. Functionally, the VP7 protein is one of the five proteins (with VP1, VP3, VP4, and VP6) which form the inner capsid of the virus. The protein is Core protein VP7 (Segment-7) of Bluetongue virus 1 (isolate Australia) (BTV 1).